The following is a 119-amino-acid chain: Non-specific lipid-transfer protein 12 (119 aa).

Residues 1–24 (MAFTPKIITCLIVLTIYMASPTES) form the signal peptide. 4 disulfides stabilise this stretch: cysteine 28/cysteine 75, cysteine 38/cysteine 52, cysteine 53/cysteine 98, and cysteine 73/cysteine 112.

It belongs to the plant LTP family.

Its function is as follows. Plant non-specific lipid-transfer proteins transfer phospholipids as well as galactolipids across membranes. May play a role in wax or cutin deposition in the cell walls of expanding epidermal cells and certain secretory tissues. The polypeptide is Non-specific lipid-transfer protein 12 (LTP12) (Arabidopsis thaliana (Mouse-ear cress)).